A 229-amino-acid chain; its full sequence is Large ribosomal subunit protein uL1 (229 aa).

This sequence belongs to the universal ribosomal protein uL1 family. In terms of assembly, part of the 50S ribosomal subunit.

In terms of biological role, binds directly to 23S rRNA. The L1 stalk is quite mobile in the ribosome, and is involved in E site tRNA release. Protein L1 is also a translational repressor protein, it controls the translation of the L11 operon by binding to its mRNA. This is Large ribosomal subunit protein uL1 from Histophilus somni (strain 129Pt) (Haemophilus somnus).